Here is a 413-residue protein sequence, read N- to C-terminus: Phosphatidylcholine-sterol acyltransferase (413 aa).

A signal peptide spans 1–22 (GRTGAGFTLLTLLLLLPQPTSQ). Cys72 and Cys96 form a disulfide bridge. An N-linked (GlcNAc...) asparagine glycan is attached at Asn106. Residue Ser203 is the Charge relay system of the active site. Catalysis depends on Ser203, which acts as the Nucleophile. Asn294 carries an N-linked (GlcNAc...) asparagine glycan. Cys335 and Cys378 are disulfide-bonded. Catalysis depends on charge relay system residues Asp367 and His399. An N-linked (GlcNAc...) asparagine glycan is attached at Asn406.

The protein belongs to the AB hydrolase superfamily. Lipase family. In terms of tissue distribution, detected in blood plasma (at protein level). Expressed in liver, brain and adrenal glands. Lower expression in testes. In laying hens, expressed higher in brain than in liver. In roosters, higher levels in liver than in brain.

The protein resides in the secreted. The catalysed reaction is a sterol + a 1,2-diacyl-sn-glycero-3-phosphocholine = a sterol ester + a 1-acyl-sn-glycero-3-phosphocholine. APOA1 is the most potent activator in plasma. Also activated by APOE, APOC1 and APOA4. Central enzyme in the extracellular metabolism of plasma lipoproteins. Synthesized mainly in the liver and secreted into plasma where it converts cholesterol and phosphatidylcholines (lecithins) to cholesteryl esters and lysophosphatidylcholines on the surface of high and low density lipoproteins (HDLs and LDLs). The cholesterol ester is then transported back to the liver. Also produced in the brain by primary astrocytes, and esterifies free cholesterol on nascent APOE-containing lipoproteins secreted from glia and influences cerebral spinal fluid (CSF) APOE- and APOA1 levels. Together with APOE and the cholesterol transporter ABCA1, plays a key role in the maturation of glial-derived, nascent lipoproteins. Required for remodeling high-density lipoprotein particles into their spherical forms. Has a preference for plasma 16:0-18:2 or 18:O-18:2 phosphatidylcholines. The protein is Phosphatidylcholine-sterol acyltransferase (LCAT) of Gallus gallus (Chicken).